Here is a 325-residue protein sequence, read N- to C-terminus: GMP reductase (325 aa).

Cysteine 174 functions as the Thioimidate intermediate in the catalytic mechanism. 203–226 (LIADGGIRTHGDIAKSIRFGASMV) serves as a coordination point for NADP(+).

Belongs to the IMPDH/GMPR family. GuaC type 2 subfamily.

The catalysed reaction is IMP + NH4(+) + NADP(+) = GMP + NADPH + 2 H(+). Functionally, catalyzes the irreversible NADPH-dependent deamination of GMP to IMP. It functions in the conversion of nucleobase, nucleoside and nucleotide derivatives of G to A nucleotides, and in maintaining the intracellular balance of A and G nucleotides. This is GMP reductase from Staphylococcus aureus (strain bovine RF122 / ET3-1).